We begin with the raw amino-acid sequence, 466 residues long: Chromosomal replication initiator protein DnaA (466 aa).

Residues 1–86 form a domain I, interacts with DnaA modulators region; sequence MSLSLWQQCL…EVGTKPVTQT (86 aa). Positions 86-129 are domain II; the sequence is TLKTPVHNVVAPTQTTTAQPQRVAPAARSGWDNVPAPAEPTYRS. Residues 130-346 are domain III, AAA+ region; the sequence is NVNVKHTFDN…GALNRVIANA (217 aa). Residues Gly174, Gly176, Lys177, and Thr178 each contribute to the ATP site. A domain IV, binds dsDNA region spans residues 347–466; it reads NFTGRAITID…FSNLIRTLSS (120 aa).

This sequence belongs to the DnaA family. Oligomerizes as a right-handed, spiral filament on DNA at oriC.

The protein resides in the cytoplasm. In terms of biological role, plays an essential role in the initiation and regulation of chromosomal replication. ATP-DnaA binds to the origin of replication (oriC) to initiate formation of the DNA replication initiation complex once per cell cycle. Binds the DnaA box (a 9 base pair repeat at the origin) and separates the double-stranded (ds)DNA. Forms a right-handed helical filament on oriC DNA; dsDNA binds to the exterior of the filament while single-stranded (ss)DNA is stabiized in the filament's interior. The ATP-DnaA-oriC complex binds and stabilizes one strand of the AT-rich DNA unwinding element (DUE), permitting loading of DNA polymerase. After initiation quickly degrades to an ADP-DnaA complex that is not apt for DNA replication. Binds acidic phospholipids. This chain is Chromosomal replication initiator protein DnaA, found in Salmonella dublin (strain CT_02021853).